Consider the following 419-residue polypeptide: Gamma-glutamyl phosphate reductase (419 aa).

This sequence belongs to the gamma-glutamyl phosphate reductase family.

The protein resides in the cytoplasm. It carries out the reaction L-glutamate 5-semialdehyde + phosphate + NADP(+) = L-glutamyl 5-phosphate + NADPH + H(+). It participates in amino-acid biosynthesis; L-proline biosynthesis; L-glutamate 5-semialdehyde from L-glutamate: step 2/2. Its function is as follows. Catalyzes the NADPH-dependent reduction of L-glutamate 5-phosphate into L-glutamate 5-semialdehyde and phosphate. The product spontaneously undergoes cyclization to form 1-pyrroline-5-carboxylate. This chain is Gamma-glutamyl phosphate reductase, found in Bordetella avium (strain 197N).